The sequence spans 1040 residues: MQVLPPSSTGGPSRLFIMRPVATTLLMVAILLAGIIGYRALPVSALPEVDYPTIQVVTLYPGASPDVMTSAVTAPLERQFGQMSGLKQMSSQSSGGASVITLQFQLTLPLDVAEQEVQAAINAATNLLPSDLPNPPVYSKVNPADPPIMTLAVTSTAMPMTQVEDMVETRVAQKISQISGVGLVTLSGGQRPAVRVKLNAQAIAALGLTSETVRTAITGANVNSAKGSLDGPSRAVTLSANDQMQSAEEYRQLIIAYQNGAPIRLGDVATVEQGAENSWLGAWANKEQAIVMNVQRQPGANIISTADSIRQMLPQLTESLPKSVKVTVLSDRTTNIRASVDDTQFELMMAIALVVMIIYLFLRNIPATIIPGVAVPLSLIGTFAVMVFLDFSINNLTLMALTIATGFVVDDAIVVIENISRYIEKGEKPLAAALKGAGEIGFTIISLIFSLIAVLIPLLFMGDIVGRLFREFAITLAVAILISAVVSLTLTPMMCARMLSQESLRKQNRFSRASEKMFDRIIAAYGRGLAKVLNHPWLTLSVALSTLLLSVLLWVFIPKGFFPVQDNGIIQGTLQAPQSSSFANMAQRQRQVADVILQDPAVQSLTSFVGVDGTNPSLNSARLQINLKPLDERDDRVQKVIARLQTAVDKVPGVDLFLQPTQDLTIDTQVSRTQYQFTLQATSLDALSTWVPQLMEKLQQLPQLSDVSSDWQDKGLVAYVNVDRDSASRLGISMADVDNALYSAFGQRLISTIYTQANQYRVVLEHNTEITPGLAALDTIRLTSSDGGVVPLSSIAKVEQRFAPLSINHLDQFPVTTISFNVPDNYSLGDAVQAIMDTEKTLNLPVDITTQFQGSTLAFQSALGSTVWLIVAAVVAMYIVLGILYESFIHPITILSTLPTAGVGALLALMIAGSELDVIAIIGIILLIGIVKKNAIMMIDFALAAEREQGMSPRDAIYQACLLRFRPILMTTLAALLGALPLMLSTGVGAELRRPLGIGMVGGLIVSQVLTLFTTPVIYLLFDRLALWTKSRFARHEEEA.

Helical transmembrane passes span Phe-16 to Ile-36, Leu-347 to Ala-367, Ile-369 to Leu-389, Leu-396 to Ile-416, Ile-440 to Phe-460, Phe-472 to Pro-492, Trp-537 to Ile-557, Leu-863 to Ile-883, Phe-888 to Ala-908, Ile-911 to Val-931, Ile-968 to Val-988, and Ile-998 to Ile-1018.

This sequence belongs to the resistance-nodulation-cell division (RND) (TC 2.A.6) family. MdtB subfamily. As to quaternary structure, part of a tripartite efflux system composed of MdtA, MdtB and MdtC. MdtB forms a heteromultimer with MdtC.

Its subcellular location is the cell inner membrane. This is Multidrug resistance protein MdtB from Shigella boydii serotype 4 (strain Sb227).